The sequence spans 493 residues: Glutamyl-tRNA(Gln) amidotransferase subunit A (493 aa).

Active-site charge relay system residues include K81 and S156. The active-site Acyl-ester intermediate is S180.

It belongs to the amidase family. GatA subfamily. Heterotrimer of A, B and C subunits.

The catalysed reaction is L-glutamyl-tRNA(Gln) + L-glutamine + ATP + H2O = L-glutaminyl-tRNA(Gln) + L-glutamate + ADP + phosphate + H(+). Allows the formation of correctly charged Gln-tRNA(Gln) through the transamidation of misacylated Glu-tRNA(Gln) in organisms which lack glutaminyl-tRNA synthetase. The reaction takes place in the presence of glutamine and ATP through an activated gamma-phospho-Glu-tRNA(Gln). The sequence is that of Glutamyl-tRNA(Gln) amidotransferase subunit A from Mycolicibacterium paratuberculosis (strain ATCC BAA-968 / K-10) (Mycobacterium paratuberculosis).